A 1087-amino-acid chain; its full sequence is Platelet-derived growth factor receptor alpha (1087 aa).

Positions Met1–Cys23 are cleaved as a signal peptide. Residues Gln24–Ala528 lie on the Extracellular side of the membrane. Ig-like C2-type domains lie at Pro26 to Thr104, Ile116 to Leu208, Gln213 to Lys312, Phe314 to Ile411, and Pro414 to Val517. N-linked (GlcNAc...) asparagine glycans are attached at residues Asn44, Asn75, Asn88, and Asn102. Cys49 and Cys99 are oxidised to a cystine. Intrachain disulfides connect Cys149/Cys189 and Cys235/Cys290. N-linked (GlcNAc...) asparagine glycans are attached at residues Asn353, Asn359, Asn458, and Asn468. Residues Cys435 and Cys501 are joined by a disulfide bond. Residues Ala529 to Trp549 traverse the membrane as a helical segment. At Lys550–Leu1087 the chain is on the cytoplasmic side. A phosphotyrosine; by autocatalysis mark is found at Tyr572 and Tyr574. The Protein kinase domain maps to Leu593–Leu954. Residues Leu599–Val607 and Lys627 contribute to the ATP site. 6 positions are modified to phosphotyrosine; by autocatalysis: Tyr720, Tyr731, Tyr742, Tyr754, Tyr762, and Tyr768. Catalysis depends on Asp818, which acts as the Proton acceptor. Tyr849 and Tyr988 each carry phosphotyrosine; by autocatalysis. Residues Lys1000–Leu1011 show a composition bias toward basic and acidic residues. A disordered region spans residues Lys1000–Lys1059. The residue at position 1017 (Tyr1017) is a Phosphotyrosine; by autocatalysis. A compositionally biased stretch (polar residues) spans Ser1039–Phe1057.

The protein belongs to the protein kinase superfamily. Tyr protein kinase family. CSF-1/PDGF receptor subfamily. As to quaternary structure, interacts with homodimeric PDGFA, PDGFB and PDGFC, and with heterodimers formed by PDGFA and PDGFB. Monomer in the absence of bound ligand. Interaction with dimeric PDGFA, PDGFB and/or PDGFC leads to receptor dimerization, where both PDGFRA homodimers and heterodimers with PDGFRB are observed. Post-translationally, ubiquitinated, leading to its internalization and degradation. In terms of processing, autophosphorylated on tyrosine residues upon ligand binding. Autophosphorylation occurs in trans, i.e. one subunit of the dimeric receptor phosphorylates tyrosine residues on the other subunit.

The protein resides in the cell membrane. It localises to the cell projection. It is found in the cilium. Its subcellular location is the golgi apparatus. The catalysed reaction is L-tyrosyl-[protein] + ATP = O-phospho-L-tyrosyl-[protein] + ADP + H(+). Present in an inactive conformation in the absence of bound ligand. Binding of PDGFA and/or PDGFB leads to dimerization and activation by autophosphorylation on tyrosine residues. In terms of biological role, tyrosine-protein kinase that acts as a cell-surface receptor for PDGFA, PDGFB and PDGFC and plays an essential role in the regulation of embryonic development, cell proliferation, survival and chemotaxis. Depending on the context, promotes or inhibits cell proliferation and cell migration. Plays an important role in the differentiation of bone marrow-derived mesenchymal stem cells. Required for normal skeleton development. Required for normal development of the gastrointestinal tract. Plays a role in cell migration and chemotaxis in wound healing. Plays a role in platelet activation, secretion of agonists from platelet granules, and in thrombin-induced platelet aggregation. Binding of its cognate ligands - homodimeric PDGFA, homodimeric PDGFB, heterodimers formed by PDGFA and PDGFB or homodimeric PDGFC -leads to the activation of several signaling cascades; the response depends on the nature of the bound ligand and is modulated by the formation of heterodimers between PDGFRA and PDGFRB. Phosphorylates PIK3R1, PLCG1, and PTPN11. Activation of PLCG1 leads to the production of the cellular signaling molecules diacylglycerol and inositol 1,4,5-trisphosphate, mobilization of cytosolic Ca(2+) and the activation of protein kinase C. Phosphorylates PIK3R1, the regulatory subunit of phosphatidylinositol 3-kinase, and thereby mediates activation of the AKT1 signaling pathway. Mediates activation of HRAS and of the MAP kinases MAPK1/ERK2 and/or MAPK3/ERK1. Promotes activation of STAT family members STAT1, STAT3 and STAT5A and/or STAT5B. Receptor signaling is down-regulated by protein phosphatases that dephosphorylate the receptor and its down-stream effectors, and by rapid internalization of the activated receptor. In Gallus gallus (Chicken), this protein is Platelet-derived growth factor receptor alpha (PDGFRA).